A 94-amino-acid chain; its full sequence is Long neurotoxin LNTX1 (94 aa).

Positions 1-21 (MKILLLTLVVVTIMCLDLGYT) are cleaved as a signal peptide. 5 cysteine pairs are disulfide-bonded: Cys24-Cys43, Cys36-Cys64, Cys49-Cys53, Cys68-Cys79, and Cys80-Cys85.

It belongs to the three-finger toxin family. Long-chain subfamily. Type II alpha-neurotoxin sub-subfamily. In terms of assembly, monomer. Expressed by the venom gland.

Its subcellular location is the secreted. In terms of biological role, binds with high affinity to muscular (alpha-1/CHRNA1) and neuronal (alpha-7/CHRNA7) nicotinic acetylcholine receptor (nAChR) and inhibits acetylcholine from binding to the receptor, thereby impairing neuromuscular and neuronal transmission. Recombinant LNTX1 leads to a functional block of the muscle-type acetylcholine receptors. Has a cytotoxic activity. This chain is Long neurotoxin LNTX1, found in Ophiophagus hannah (King cobra).